A 525-amino-acid chain; its full sequence is GMP synthase [glutamine-hydrolyzing] (525 aa).

The 199-residue stretch at 9-207 (RILILDFGSQ…ILDICGCEAL (199 aa)) folds into the Glutamine amidotransferase type-1 domain. C86 serves as the catalytic Nucleophile. Catalysis depends on residues H181 and E183. The GMPS ATP-PPase domain occupies 208–400 (WTPSKIAEDA…LGLPYDMVYR (193 aa)). Residue 235–241 (SGGVDSS) participates in ATP binding.

As to quaternary structure, homodimer.

It carries out the reaction XMP + L-glutamine + ATP + H2O = GMP + L-glutamate + AMP + diphosphate + 2 H(+). Its pathway is purine metabolism; GMP biosynthesis; GMP from XMP (L-Gln route): step 1/1. Functionally, catalyzes the synthesis of GMP from XMP. The sequence is that of GMP synthase [glutamine-hydrolyzing] from Pseudomonas fluorescens (strain ATCC BAA-477 / NRRL B-23932 / Pf-5).